Here is a 93-residue protein sequence, read N- to C-terminus: Cobalt transport protein CbiN (93 aa).

The next 2 membrane-spanning stretches (helical) occupy residues 5–25 and 62–82; these read LILL…DHGG and SLLF…ILGY.

Belongs to the CbiN family. In terms of assembly, forms an energy-coupling factor (ECF) transporter complex composed of an ATP-binding protein (A component, CbiO), a transmembrane protein (T component, CbiQ) and 2 possible substrate-capture proteins (S components, CbiM and CbiN) of unknown stoichimetry.

Its subcellular location is the cell inner membrane. The protein operates within cofactor biosynthesis; adenosylcobalamin biosynthesis. Its function is as follows. Part of the energy-coupling factor (ECF) transporter complex CbiMNOQ involved in cobalt import. This Citrobacter koseri (strain ATCC BAA-895 / CDC 4225-83 / SGSC4696) protein is Cobalt transport protein CbiN.